The chain runs to 147 residues: MAIERTLSIIKPDGVEKGIIGKIIGRFEEKGLKPVAIRLTQLSKAEAEGFYAVHKARPFFADLVKFMTSGPVVLMVLEGENAVARNREIMGATDPKKADAGTIRKDFATDIEKNTVHGSDSVENAKIEVSYFFPEVQVHAYEWKKLA.

ATP contacts are provided by Lys11, Phe59, Arg87, Thr93, Arg104, and Asn114. His117 (pros-phosphohistidine intermediate) is an active-site residue.

This sequence belongs to the NDK family. As to quaternary structure, homotetramer. It depends on Mg(2+) as a cofactor.

It is found in the cytoplasm. It catalyses the reaction a 2'-deoxyribonucleoside 5'-diphosphate + ATP = a 2'-deoxyribonucleoside 5'-triphosphate + ADP. The catalysed reaction is a ribonucleoside 5'-diphosphate + ATP = a ribonucleoside 5'-triphosphate + ADP. Its function is as follows. Major role in the synthesis of nucleoside triphosphates other than ATP. The ATP gamma phosphate is transferred to the NDP beta phosphate via a ping-pong mechanism, using a phosphorylated active-site intermediate. The chain is Nucleoside diphosphate kinase from Anaeromyxobacter dehalogenans (strain 2CP-C).